The chain runs to 131 residues: Secreted RxLR effector protein 45 (131 aa).

The N-terminal stretch at 1–16 (MSIFIFISLVLGLAHQ) is a signal peptide. The short motif at 56–59 (RPLR) is the RxLR element. Asn-128 carries N-linked (GlcNAc...) asparagine glycosylation.

This sequence belongs to the RxLR effector family.

The protein resides in the secreted. It is found in the host nucleus. Functionally, secreted effector that completely suppresses the host cell death induced by cell death-inducing proteins. The chain is Secreted RxLR effector protein 45 from Plasmopara viticola (Downy mildew of grapevine).